The chain runs to 237 residues: Small ribosomal subunit protein uS2 (237 aa).

This sequence belongs to the universal ribosomal protein uS2 family.

The sequence is that of Small ribosomal subunit protein uS2 from Clostridioides difficile (strain 630) (Peptoclostridium difficile).